The chain runs to 199 residues: Probable cobalt-precorrin-6B C(15)-methyltransferase (decarboxylating) (199 aa).

Residues Thr24, 48 to 52 (GCGTG), Asp72, and Ala101 each bind S-adenosyl-L-methionine.

It belongs to the methyltransferase superfamily. Archaeal-type CbiT family.

The catalysed reaction is Co-precorrin-6B + S-adenosyl-L-methionine = Co-precorrin-7 + S-adenosyl-L-homocysteine + CO2. It participates in cofactor biosynthesis; adenosylcobalamin biosynthesis; cob(II)yrinate a,c-diamide from sirohydrochlorin (anaerobic route): step 8/10. Catalyzes the methylation of C-15 in cobalt-precorrin-6B followed by the decarboxylation of C-12 to form cobalt-precorrin-7. The chain is Probable cobalt-precorrin-6B C(15)-methyltransferase (decarboxylating) from Saccharolobus solfataricus (strain ATCC 35092 / DSM 1617 / JCM 11322 / P2) (Sulfolobus solfataricus).